Consider the following 423-residue polypeptide: MNKLVIQGGRPLSGTLTASGSKNTSLPIIAATLLHGGGTFTLHRIPNLQDIDTFRQLLHHLGAESSLENNTLTISTANVNSILAPYELVKKMRASIYVLGPLLARFGHARVSLPGGCAFGPRPIDLHLMVMEKLGATITIETGFIDAVAKEGKLRGAHIHFPISSVGATGNALMAAVLAEGTTTLTNAAAEPEIETLCNFLIAMGATIRGVGTTELEIEGTSSLHAVTFNNVFDRIEAGTLLAAAAITGGDITLLEANPRHMKSVLKKFAEAGCTIETTPDSITLKSPETLLPVDVTAKPYPSFPTDMQAQWIALMTQANGTSRITDKVYHERFNHIPELNRLGAGIEIHKNQAIVHGIRKLSGGPVMSTDLRASACLVLAGLVAEGTTEVLRVYHLDRGYENIEMKLRTLGASIERQKYQEF.

Residue 22–23 (KN) coordinates phosphoenolpyruvate. UDP-N-acetyl-alpha-D-glucosamine is bound at residue Arg93. Cys117 serves as the catalytic Proton donor. Residue Cys117 is modified to 2-(S-cysteinyl)pyruvic acid O-phosphothioketal. UDP-N-acetyl-alpha-D-glucosamine contacts are provided by residues 122–126 (RPIDL), Asp307, and Val329.

It belongs to the EPSP synthase family. MurA subfamily.

The protein resides in the cytoplasm. The enzyme catalyses phosphoenolpyruvate + UDP-N-acetyl-alpha-D-glucosamine = UDP-N-acetyl-3-O-(1-carboxyvinyl)-alpha-D-glucosamine + phosphate. It participates in cell wall biogenesis; peptidoglycan biosynthesis. In terms of biological role, cell wall formation. Adds enolpyruvyl to UDP-N-acetylglucosamine. This is UDP-N-acetylglucosamine 1-carboxyvinyltransferase from Chlorobium chlorochromatii (strain CaD3).